The primary structure comprises 475 residues: ATP synthase subunit beta (475 aa).

155–162 (GGAGVGKT) provides a ligand contact to ATP.

The protein belongs to the ATPase alpha/beta chains family. F-type ATPases have 2 components, CF(1) - the catalytic core - and CF(0) - the membrane proton channel. CF(1) has five subunits: alpha(3), beta(3), gamma(1), delta(1), epsilon(1). CF(0) has three main subunits: a(1), b(2) and c(9-12). The alpha and beta chains form an alternating ring which encloses part of the gamma chain. CF(1) is attached to CF(0) by a central stalk formed by the gamma and epsilon chains, while a peripheral stalk is formed by the delta and b chains.

It is found in the cell inner membrane. The catalysed reaction is ATP + H2O + 4 H(+)(in) = ADP + phosphate + 5 H(+)(out). Functionally, produces ATP from ADP in the presence of a proton gradient across the membrane. The catalytic sites are hosted primarily by the beta subunits. The sequence is that of ATP synthase subunit beta from Rhizobium etli (strain ATCC 51251 / DSM 11541 / JCM 21823 / NBRC 15573 / CFN 42).